Here is a 303-residue protein sequence, read N- to C-terminus: Glutamate formimidoyltransferase (303 aa).

Residue His81 is the For formimidoyltransferase activity of the active site. 164–172 (GPSVVGKAG) provides a ligand contact to folate.

This sequence belongs to the formiminotransferase family.

It localises to the cytoplasm. It catalyses the reaction (6S)-5-formyl-5,6,7,8-tetrahydrofolate + L-glutamate = N-formyl-L-glutamate + (6S)-5,6,7,8-tetrahydrofolate + H(+). The catalysed reaction is 5-formimidoyltetrahydrofolate + L-glutamate = N-formimidoyl-L-glutamate + (6S)-5,6,7,8-tetrahydrofolate. The enzyme catalyses (6S)-5-formyl-5,6,7,8-tetrahydrofolate + ATP = (6R)-5,10-methenyltetrahydrofolate + ADP + phosphate. It functions in the pathway amino-acid degradation; L-histidine degradation into L-glutamate; L-glutamate from N-formimidoyl-L-glutamate (transferase route): step 1/1. Its pathway is one-carbon metabolism; tetrahydrofolate interconversion. In terms of biological role, catalyzes the transfer of the formyl group from N-formylglutamate to tetrahydrofolate (THF) to yield 5-formyltetrahydrofolate (5-CHO-THF) and glutamate (Glu). The triglutamate form of 5-CHO-THF (5-CHO-THF-Glu3) can also be used as substrate. It can also catalyze the transfer of the formimino group from N-formiminoglutamate to tetrahydrofolate (THF) to yield 5-formiminotetrahydrofolate (5-NH=CH-THF) and glutamate (Glu). It can replace YgfA to catalyze the irreversible ATP-dependent transformation of 5-CHO-THF to form 5,10-methenyltetrahydrofolate (5,10-CH=THF). This is Glutamate formimidoyltransferase from Thermoplasma acidophilum (strain ATCC 25905 / DSM 1728 / JCM 9062 / NBRC 15155 / AMRC-C165).